The primary structure comprises 218 residues: Small ribosomal subunit protein uS3 (218 aa).

The region spanning 38–106 (IRDYVAKRLS…RVHINIVEIK (69 aa)) is the KH type-2 domain.

Belongs to the universal ribosomal protein uS3 family. In terms of assembly, part of the 30S ribosomal subunit. Forms a tight complex with proteins S10 and S14.

Its function is as follows. Binds the lower part of the 30S subunit head. Binds mRNA in the 70S ribosome, positioning it for translation. This Listeria monocytogenes serotype 4b (strain F2365) protein is Small ribosomal subunit protein uS3.